The chain runs to 370 residues: Putative L-lysine 2,3-aminomutase aq_454 (370 aa).

A Radical SAM core domain is found at 107 to 322 (HRYPDRVLLN…RGRLSGFGIP (216 aa)). 3 residues coordinate [4Fe-4S] cluster: Cys121, Cys125, and Cys128. At Lys334 the chain carries N6-(pyridoxal phosphate)lysine.

Belongs to the radical SAM superfamily. KamA family. It depends on [4Fe-4S] cluster as a cofactor. Pyridoxal 5'-phosphate is required as a cofactor.

This is Putative L-lysine 2,3-aminomutase aq_454 from Aquifex aeolicus (strain VF5).